The primary structure comprises 167 residues: ATP synthase subunit b (167 aa).

The chain crosses the membrane as a helical span at residues 7 to 25; sequence SFLLAVSFVIFIYLIYRPA.

Belongs to the ATPase B chain family. F-type ATPases have 2 components, F(1) - the catalytic core - and F(0) - the membrane proton channel. F(1) has five subunits: alpha(3), beta(3), gamma(1), delta(1), epsilon(1). F(0) has three main subunits: a(1), b(2) and c(10-14). The alpha and beta chains form an alternating ring which encloses part of the gamma chain. F(1) is attached to F(0) by a central stalk formed by the gamma and epsilon chains, while a peripheral stalk is formed by the delta and b chains.

Its subcellular location is the cell inner membrane. Functionally, f(1)F(0) ATP synthase produces ATP from ADP in the presence of a proton or sodium gradient. F-type ATPases consist of two structural domains, F(1) containing the extramembraneous catalytic core and F(0) containing the membrane proton channel, linked together by a central stalk and a peripheral stalk. During catalysis, ATP synthesis in the catalytic domain of F(1) is coupled via a rotary mechanism of the central stalk subunits to proton translocation. Component of the F(0) channel, it forms part of the peripheral stalk, linking F(1) to F(0). The chain is ATP synthase subunit b from Rickettsia typhi (strain ATCC VR-144 / Wilmington).